We begin with the raw amino-acid sequence, 336 residues long: Uroporphyrinogen decarboxylase (336 aa).

Substrate contacts are provided by residues 24–28 (RQVGR), D73, Y142, S197, and H312.

It belongs to the uroporphyrinogen decarboxylase family. Homodimer.

The protein resides in the cytoplasm. The enzyme catalyses uroporphyrinogen III + 4 H(+) = coproporphyrinogen III + 4 CO2. It functions in the pathway porphyrin-containing compound metabolism; protoporphyrin-IX biosynthesis; coproporphyrinogen-III from 5-aminolevulinate: step 4/4. In terms of biological role, catalyzes the decarboxylation of four acetate groups of uroporphyrinogen-III to yield coproporphyrinogen-III. The protein is Uroporphyrinogen decarboxylase of Chlamydia trachomatis serovar L2 (strain ATCC VR-902B / DSM 19102 / 434/Bu).